A 326-amino-acid chain; its full sequence is Vestitone reductase (326 aa).

Residues 12 to 18 (GGTGFLG), Arg37, and Tyr164 contribute to the NADP(+) site.

Belongs to the NAD(P)-dependent epimerase/dehydratase family. Dihydroflavonol-4-reductase subfamily. In terms of assembly, monomer. In terms of tissue distribution, detected in roots, and at lower levels in root nodules. Not detected in petioles, leaf and stem.

It carries out the reaction a (3R,4R)-4,2'-dihydroxyisoflavan + NADP(+) = a (3R)-2'-hydroxyisoflavanone + NADPH + H(+). With respect to regulation, inhibited by vestitone concentrations above 50 uM. Its function is as follows. Stereospecific enzyme that catalyzes the NADPH-dependent reduction of (3R)-vestitone to (3R,4R)-4'-methoxyisoflavan-2',4,7-triol (DMI). Has no activity with (3S)-vestitone. Catalyzes the penultimate step in the biosynthesis of the phytoalexin medicarpin, and thereby contributes to plant defense reactions. The polypeptide is Vestitone reductase (Medicago sativa (Alfalfa)).